Consider the following 665-residue polypeptide: MNLFHLQAPFQATGDQPQAIAQLVNSIEKGNRFQTLLGATGTGKTFTIAATIEKIGKPTLVLAHNKTLAAQLCNELRQFFPENAVEYFISYYDYYQPEAYIPVSDTYIEKSASINDEIDMLRHSATRSLFERRDVVVVASISCIYGLGMPSEYLKASIGLEVGKEINQRQLLRDLVSVQYSRNDLDLQRGRFRLRGDVLELVPAYEDRVIRVEFFGDEIDAIRYLDPVTGNSLQSLERVNIYPARHFVTPDDQLEAACQGIELELEDRLEELEKQGKLLEAQRLGQRTRYDLELLREVGYCNGVENYSRYLAGREPGQPPECLIDYFPKDWLLVIDESHVTIPQLRGMYNGDQARKKVLIEHGFRLPSAADNRPLKAEEFWEKVNQCVFVSATPGNWEIEQSQGQVIEQIIRPTGVLDPEIFVRPTEGQVDDLLGEIKQRIKRKERVLITTLTKRMAEDLTEYFQERGVKVQYLHSEISSIERIEILQNLREGEFDVLIGVNLLREGLDLPEVSLVAILDADKEGFLRAERSLIQTIGRAARHIQGQAILYADNLTDSMIKAMEETERRRNIQMAHNKRHGITPQPIVTRSSNAILSFLDISRRLNAQQLEKVYDQADELPLEKVPELIGQLEEQMKEAAKKLEFEEAAKYRDRIQHLRDKLLGH.

The Helicase ATP-binding domain maps to 25–176 (NSIEKGNRFQ…NQRQLLRDLV (152 aa)). Residue 38 to 45 (GATGTGKT) participates in ATP binding. The Beta-hairpin signature appears at 91–114 (YYDYYQPEAYIPVSDTYIEKSASI). The Helicase C-terminal domain maps to 429–595 (QVDDLLGEIK…PIVTRSSNAI (167 aa)). In terms of domain architecture, UVR spans 626 to 661 (PELIGQLEEQMKEAAKKLEFEEAAKYRDRIQHLRDK).

The protein belongs to the UvrB family. In terms of assembly, forms a heterotetramer with UvrA during the search for lesions. Interacts with UvrC in an incision complex.

The protein localises to the cytoplasm. Its function is as follows. The UvrABC repair system catalyzes the recognition and processing of DNA lesions. A damage recognition complex composed of 2 UvrA and 2 UvrB subunits scans DNA for abnormalities. Upon binding of the UvrA(2)B(2) complex to a putative damaged site, the DNA wraps around one UvrB monomer. DNA wrap is dependent on ATP binding by UvrB and probably causes local melting of the DNA helix, facilitating insertion of UvrB beta-hairpin between the DNA strands. Then UvrB probes one DNA strand for the presence of a lesion. If a lesion is found the UvrA subunits dissociate and the UvrB-DNA preincision complex is formed. This complex is subsequently bound by UvrC and the second UvrB is released. If no lesion is found, the DNA wraps around the other UvrB subunit that will check the other stand for damage. The polypeptide is UvrABC system protein B (Gloeothece citriformis (strain PCC 7424) (Cyanothece sp. (strain PCC 7424))).